The chain runs to 227 residues: NADH-quinone oxidoreductase subunit C (227 aa).

Belongs to the complex I 30 kDa subunit family. As to quaternary structure, NDH-1 is composed of 14 different subunits. Subunits NuoB, C, D, E, F, and G constitute the peripheral sector of the complex.

It is found in the cell inner membrane. It carries out the reaction a quinone + NADH + 5 H(+)(in) = a quinol + NAD(+) + 4 H(+)(out). In terms of biological role, NDH-1 shuttles electrons from NADH, via FMN and iron-sulfur (Fe-S) centers, to quinones in the respiratory chain. The immediate electron acceptor for the enzyme in this species is believed to be ubiquinone. Couples the redox reaction to proton translocation (for every two electrons transferred, four hydrogen ions are translocated across the cytoplasmic membrane), and thus conserves the redox energy in a proton gradient. This Legionella pneumophila subsp. pneumophila (strain Philadelphia 1 / ATCC 33152 / DSM 7513) protein is NADH-quinone oxidoreductase subunit C.